The primary structure comprises 150 residues: Arginine repressor (150 aa).

The protein belongs to the ArgR family.

Its subcellular location is the cytoplasm. The protein operates within amino-acid biosynthesis; L-arginine biosynthesis [regulation]. Functionally, regulates arginine biosynthesis genes. This Ruminiclostridium cellulolyticum (strain ATCC 35319 / DSM 5812 / JCM 6584 / H10) (Clostridium cellulolyticum) protein is Arginine repressor.